Here is a 66-residue protein sequence, read N- to C-terminus: Omega conotoxin-CVIE (66 aa).

A signal peptide spans 1–17; the sequence is VVIVAVLLLTACQLITA. The propeptide occupies 18-40; the sequence is NDSRGTQKHRALRSDTKLSMSTR. 3 disulfide bridges follow: cysteine 41/cysteine 56, cysteine 48/cysteine 60, and cysteine 55/cysteine 65. Cysteine 65 is modified (cysteine amide).

It belongs to the conotoxin O1 superfamily. Expressed by the venom duct.

Its subcellular location is the secreted. In terms of biological role, omega-conotoxins act at presynaptic membranes, they bind and block voltage-gated calcium channels. This toxin blocks N-type calcium channels (Cav2.2/CACNA1B). It shows a higher potency when Cav2.2/CACNA1B is only expressed with the ancillary subunit CACNB3 (IC(50)=0.12 nM) than on Cav2.2/CACNA1B expressed with the ancillary subunits CACNA2D1 and CACNB3 (IC(50)=2.6 nM). The Cav2.2/CACNA1B block by this toxin is voltage-independent, whereas the recovery from toxin block is voltage-dependent. There is a low recovery at physiological membrane potential and a high recovery with hyperpolarized potential. This indicates that the toxin has a higher affinity for Cav2.2/CACNA1B in the inactivated state. It is noteworthy that ancillary subunits beta modulate recovery from this toxin block. Cav2.2/CACNA1B expressed with the ancillary subunit CACNB2a (isoform 2a) almost recover completely from this toxin block, whereas Cav2.2/CACNA1B expressed with CACNB3 exhibits relatively weak recovery. Inhibition by this toxin of excitatory synaptic transmission is reversible. In vivo, when tested on rat model of persistent pain, this toxin blocks chronic pain behavior. The protein is Omega conotoxin-CVIE of Conus catus (Cat cone).